The primary structure comprises 1023 residues: 2-oxoglutarate dehydrogenase complex component E1 (1023 aa).

The transit peptide at 1–40 (MFHLRTCAAKLRPLTASQTVKTFSQNRPAAARTFQQIRCY) directs the protein to the mitochondrion. At Lys74 the chain carries N6-succinyllysine. Phosphoserine is present on Ser100. 3 residues coordinate Ca(2+): His143, Asp156, and Asp158. Arg312 is a thiamine diphosphate binding site. Lys401 carries the post-translational modification N6-acetyllysine. Asp411, Asn444, and Ile446 together coordinate thiamine diphosphate. Mg(2+)-binding residues include Asp411, Asn444, and Ile446. Lys534 participates in a covalent cross-link: Glycyl lysine isopeptide (Lys-Gly) (interchain with G-Cter in ubiquitin). Residue Lys564 is modified to N6-succinyllysine. Thiamine diphosphate is bound at residue Gln676. Lys970 is subject to N6-acetyllysine.

This sequence belongs to the alpha-ketoglutarate dehydrogenase family. In terms of assembly, homodimer. The 2-oxoglutarate dehydrogenase complex is composed of OGDH (2-oxoglutarate dehydrogenase; E1), DLST (dihydrolipoamide succinyltransferase; E2), DLD (dihydrolipoamide dehydrogenase; E3) and the assembly factor KGD4. It contains multiple copies of the three enzymatic components (E1, E2 and E3). In the nucleus, the 2-oxoglutarate dehydrogenase complex associates with KAT2A. Interacts with ABHD11; this interaction maintains the functional lipoylation of the 2-oxoglutarate dehydrogenase complex. Thiamine diphosphate serves as cofactor. Mg(2+) is required as a cofactor.

It localises to the mitochondrion. Its subcellular location is the nucleus. It catalyses the reaction N(6)-[(R)-lipoyl]-L-lysyl-[protein] + 2-oxoglutarate + H(+) = N(6)-[(R)-S(8)-succinyldihydrolipoyl]-L-lysyl-[protein] + CO2. Its activity is regulated as follows. Calcium ions and ADP stimulate, whereas ATP and NADH reduce catalytic activity. Its function is as follows. 2-oxoglutarate dehydrogenase (E1o) component of the 2-oxoglutarate dehydrogenase complex (OGDHC). Participates in the first step, rate limiting for the overall conversion of 2-oxoglutarate to succinyl-CoA and CO(2) catalyzed by the whole OGDHC. Catalyzes the irreversible decarboxylation of 2-oxoglutarate (alpha-ketoglutarate) via the thiamine diphosphate (ThDP) cofactor and subsequent transfer of the decarboxylated acyl intermediate on an oxidized dihydrolipoyl group that is covalently amidated to the E2 enzyme (dihydrolipoyllysine-residue succinyltransferase or DLST). Plays a key role in the Krebs (citric acid) cycle, which is a common pathway for oxidation of fuel molecules, including carbohydrates, fatty acids, and amino acids. Can catalyze the decarboxylation of 2-oxoadipate in vitro, but at a much lower rate than 2-oxoglutarate. Mainly active in the mitochondrion. A fraction of the 2-oxoglutarate dehydrogenase complex also localizes in the nucleus and is required for lysine succinylation of histones: associates with KAT2A on chromatin and provides succinyl-CoA to histone succinyltransferase KAT2A. The sequence is that of 2-oxoglutarate dehydrogenase complex component E1 from Macaca fascicularis (Crab-eating macaque).